The primary structure comprises 278 residues: Polyamine aminopropyltransferase (278 aa).

The region spanning 5 to 238 is the PABS domain; the sequence is ELWFTEQQTP…GLWSFTMGSK (234 aa). Gln34 serves as a coordination point for S-methyl-5'-thioadenosine. Spermidine is bound by residues His65 and Asp89. Residues Glu109 and 140–141 contribute to the S-methyl-5'-thioadenosine site; that span reads DG. The Proton acceptor role is filled by Asp158. 158–161 lines the spermidine pocket; the sequence is DSTD. An S-methyl-5'-thioadenosine-binding site is contributed by Pro165.

Belongs to the spermidine/spermine synthase family. In terms of assembly, homodimer or homotetramer.

It is found in the cytoplasm. The catalysed reaction is S-adenosyl 3-(methylsulfanyl)propylamine + putrescine = S-methyl-5'-thioadenosine + spermidine + H(+). It participates in amine and polyamine biosynthesis; spermidine biosynthesis; spermidine from putrescine: step 1/1. Functionally, catalyzes the irreversible transfer of a propylamine group from the amino donor S-adenosylmethioninamine (decarboxy-AdoMet) to putrescine (1,4-diaminobutane) to yield spermidine. The protein is Polyamine aminopropyltransferase of Caldicellulosiruptor saccharolyticus (strain ATCC 43494 / DSM 8903 / Tp8T 6331).